We begin with the raw amino-acid sequence, 351 residues long: Phosphate acyltransferase (351 aa).

This sequence belongs to the PlsX family. As to quaternary structure, homodimer. Probably interacts with PlsY.

The protein localises to the cytoplasm. The catalysed reaction is a fatty acyl-[ACP] + phosphate = an acyl phosphate + holo-[ACP]. It participates in lipid metabolism; phospholipid metabolism. Functionally, catalyzes the reversible formation of acyl-phosphate (acyl-PO(4)) from acyl-[acyl-carrier-protein] (acyl-ACP). This enzyme utilizes acyl-ACP as fatty acyl donor, but not acyl-CoA. The polypeptide is Phosphate acyltransferase (Neisseria meningitidis serogroup B (strain ATCC BAA-335 / MC58)).